The sequence spans 60 residues: Large ribosomal subunit protein bL32 (60 aa).

It belongs to the bacterial ribosomal protein bL32 family.

The polypeptide is Large ribosomal subunit protein bL32 (Paramagnetospirillum magneticum (strain ATCC 700264 / AMB-1) (Magnetospirillum magneticum)).